A 126-amino-acid chain; its full sequence is MPEPAKSAPAPKKGSKKAVTKAQKKDGKKRKRSRKESYSVYVYKVLKQVHPDTGISSKAMGIMNSFVNDIFERIAGEASRLAHYNKRSTITSREIQTAVRLLLPGELAKHAVSEGTKAVTKYTSAK.

Low complexity predominate over residues 1–12; that stretch reads MPEPAKSAPAPK. Residues 1–36 are disordered; sequence MPEPAKSAPAPKKGSKKAVTKAQKKDGKKRKRSRKE. Pro2 carries the N-acetylproline modification. ADP-ribosyl glutamic acid is present on Glu3. N6-(2-hydroxyisobutyryl)lysine; alternate is present on Lys6. Lys6 carries the post-translational modification N6-(beta-hydroxybutyryl)lysine; alternate. Lys6 is subject to N6-acetyllysine; alternate. Position 6 is an N6-butyryllysine; alternate (Lys6). Lys6 carries the N6-crotonyllysine; alternate modification. Lys6 is subject to N6-lactoyllysine; alternate. Residue Lys6 forms a Glycyl lysine isopeptide (Lys-Gly) (interchain with G-Cter in SUMO2); alternate linkage. An ADP-ribosylserine modification is found at Ser7. Lys12 bears the N6-(beta-hydroxybutyryl)lysine; alternate mark. An N6-acetyllysine; alternate mark is found at Lys12 and Lys13. N6-crotonyllysine; alternate is present on residues Lys12 and Lys13. At Lys12 the chain carries N6-lactoyllysine; alternate. An N6-(2-hydroxyisobutyryl)lysine; alternate modification is found at Lys13. Phosphoserine; by STK4/MST1 is present on Ser15. An N6-acetyllysine; alternate mark is found at Lys16, Lys17, Lys21, and Lys24. N6-crotonyllysine; alternate occurs at positions 16, 17, 21, and 24. An N6-lactoyllysine; alternate mark is found at Lys16, Lys17, Lys21, and Lys24. Lys17 and Lys21 each carry N6-(beta-hydroxybutyryl)lysine; alternate. At Lys17 the chain carries N6-glutaryllysine; alternate. Lys21 and Lys24 each carry N6-(2-hydroxyisobutyryl)lysine; alternate. The residue at position 21 (Lys21) is an N6-butyryllysine; alternate. Residue Lys21 forms a Glycyl lysine isopeptide (Lys-Gly) (interchain with G-Cter in SUMO2); alternate linkage. Lys25 is modified (N6-(2-hydroxyisobutyryl)lysine). Lys35 is subject to N6-(2-hydroxyisobutyryl)lysine; alternate. Lys35 is subject to N6-(beta-hydroxybutyryl)lysine; alternate. Lys35 is modified (N6-crotonyllysine; alternate). Lys35 bears the N6-glutaryllysine; alternate mark. Lys35 carries the N6-succinyllysine; alternate modification. Lys35 participates in a covalent cross-link: Glycyl lysine isopeptide (Lys-Gly) (interchain with G-Cter in ubiquitin); alternate. A PolyADP-ribosyl glutamic acid modification is found at Glu36. A Phosphoserine; by AMPK modification is found at Ser37. N6-(2-hydroxyisobutyryl)lysine; alternate is present on residues Lys44, Lys47, and Lys58. An N6-lactoyllysine; alternate modification is found at Lys44. N6-glutaryllysine; alternate occurs at positions 44 and 47. Residue Lys47 is modified to N6-methyllysine; alternate. Lys58 carries the post-translational modification N6,N6-dimethyllysine; alternate. At Arg80 the chain carries Dimethylated arginine. Position 86 is an N6-(2-hydroxyisobutyryl)lysine; alternate (Lys86). Lys86 carries the N6-(beta-hydroxybutyryl)lysine; alternate modification. N6-acetyllysine; alternate is present on Lys86. Residue Lys86 is modified to N6-lactoyllysine; alternate. Lys86 bears the N6,N6,N6-trimethyllysine; alternate mark. Omega-N-methylarginine is present on residues Arg87 and Arg93. Lys109 carries the post-translational modification N6-(2-hydroxyisobutyryl)lysine; alternate. Residue Lys109 is modified to N6-lactoyllysine; alternate. The residue at position 109 (Lys109) is an N6-glutaryllysine; alternate. N6-methyllysine; alternate is present on Lys109. Ser113 carries an O-linked (GlcNAc) serine glycan. Phosphothreonine is present on Thr116. Residues Lys117 and Lys121 each carry the N6-(2-hydroxyisobutyryl)lysine; alternate modification. 2 positions are modified to N6-(beta-hydroxybutyryl)lysine; alternate: Lys117 and Lys121. N6-lactoyllysine; alternate occurs at positions 117 and 121. An N6-glutaryllysine; alternate mark is found at Lys117 and Lys121. Residues Lys117 and Lys121 each carry the N6-succinyllysine; alternate modification. Residue Lys117 is modified to N6-malonyllysine; alternate. Lys117 bears the N6-methylated lysine; alternate mark. Lys121 participates in a covalent cross-link: Glycyl lysine isopeptide (Lys-Gly) (interchain with G-Cter in ubiquitin); alternate.

It belongs to the histone H2B family. In terms of assembly, the nucleosome is a histone octamer containing two molecules each of H2A, H2B, H3 and H4 assembled in one H3-H4 heterotetramer and two H2A-H2B heterodimers. The octamer wraps approximately 147 bp of DNA. Post-translationally, monoubiquitination at Lys-35 (H2BK34Ub) by the MSL1/MSL2 dimer is required for histone H3 'Lys-4' (H3K4me) and 'Lys-79' (H3K79me) methylation and transcription activation at specific gene loci, such as HOXA9 and MEIS1 loci. Similarly, monoubiquitination at Lys-121 (H2BK120Ub) by the RNF20/40 complex gives a specific tag for epigenetic transcriptional activation and is also prerequisite for histone H3 'Lys-4' and 'Lys-79' methylation. It also functions cooperatively with the FACT dimer to stimulate elongation by RNA polymerase II. H2BK120Ub also acts as a regulator of mRNA splicing: deubiquitination by USP49 is required for efficient cotranscriptional splicing of a large set of exons. In terms of processing, phosphorylation at Ser-37 (H2BS36ph) by AMPK in response to stress promotes transcription. Phosphorylated on Ser-15 (H2BS14ph) by STK4/MST1 during apoptosis; which facilitates apoptotic chromatin condensation. Also phosphorylated on Ser-15 in response to DNA double strand breaks (DSBs), and in correlation with somatic hypermutation and immunoglobulin class-switch recombination. GlcNAcylation at Ser-113 promotes monoubiquitination of Lys-121. It fluctuates in response to extracellular glucose, and associates with transcribed genes. Post-translationally, ADP-ribosylated by PARP1 or PARP2 on Ser-7 (H2BS6ADPr) in response to DNA damage. H2BS6ADPr promotes recruitment of CHD1L. Mono-ADP-ribosylated on Glu-3 (H2BE2ADPr) by PARP3 in response to single-strand breaks. Poly ADP-ribosylation on Glu-36 (H2BE35ADPr) by PARP1 regulates adipogenesis: it inhibits phosphorylation at Ser-37 (H2BS36ph), thereby blocking expression of pro-adipogenetic genes. In terms of processing, crotonylation (Kcr) is specifically present in male germ cells and marks testis-specific genes in post-meiotic cells, including X-linked genes that escape sex chromosome inactivation in haploid cells. Crotonylation marks active promoters and enhancers and confers resistance to transcriptional repressors. It is also associated with post-meiotically activated genes on autosomes. Lactylated in macrophages by EP300/P300 by using lactoyl-CoA directly derived from endogenous or exogenous lactate, leading to stimulates gene transcription.

The protein localises to the nucleus. Its subcellular location is the chromosome. Core component of nucleosome. Nucleosomes wrap and compact DNA into chromatin, limiting DNA accessibility to the cellular machineries which require DNA as a template. Histones thereby play a central role in transcription regulation, DNA repair, DNA replication and chromosomal stability. DNA accessibility is regulated via a complex set of post-translational modifications of histones, also called histone code, and nucleosome remodeling. Its function is as follows. Has broad antibacterial activity. May contribute to the formation of the functional antimicrobial barrier of the colonic epithelium, and to the bactericidal activity of amniotic fluid. This chain is Histone H2B type 1-K, found in Homo sapiens (Human).